The sequence spans 342 residues: Inositol-tetrakisphosphate 1-kinase 5 (342 aa).

The 1D-myo-inositol 1,3,4-trisphosphate site is built by lysine 25 and lysine 67. 2 residues coordinate ATP: arginine 102 and lysine 154. 2 residues coordinate 1D-myo-inositol 1,3,4-trisphosphate: histidine 165 and lysine 197. ATP-binding positions include 186–197 (QEFVNHGGVIFK) and serine 212. Residues aspartate 283, aspartate 298, and asparagine 300 each contribute to the Mg(2+) site. Asparagine 300 serves as a coordination point for 1D-myo-inositol 1,3,4-trisphosphate.

The protein belongs to the ITPK1 family. Monomer. Requires Mg(2+) as cofactor. Expressed in roots, leaves, flowers, anthers and embryos.

It catalyses the reaction 1D-myo-inositol 3,4,5,6-tetrakisphosphate + ATP = 1D-myo-inositol 1,3,4,5,6-pentakisphosphate + ADP + H(+). The enzyme catalyses 1D-myo-inositol 1,3,4-trisphosphate + ATP = 1D-myo-inositol 1,3,4,5-tetrakisphosphate + ADP + H(+). The catalysed reaction is 1D-myo-inositol 1,3,4-trisphosphate + ATP = 1D-myo-inositol 1,3,4,6-tetrakisphosphate + ADP + H(+). In terms of biological role, kinase that can phosphorylate various inositol polyphosphate such as Ins(3,4,5,6)P4 or Ins(1,3,4)P3 and participates in phytic acid biosynthesis in developing seeds. Phytic acid is the primary storage form of phosphorus in cereal grains and other plant seeds. The protein is Inositol-tetrakisphosphate 1-kinase 5 (ITPK5) of Oryza sativa subsp. japonica (Rice).